The chain runs to 258 residues: ProSAAS (258 aa).

An N-terminal signal peptide occupies residues 1 to 33 (MAGSPLLCGPRAGGVGILVLLLLGLLRLPPTLS). Residues 34 to 213 (ARPVKEPRSL…SSEPEAAPAP (180 aa)) are proSAAS(1-180). 3 disordered regions span residues 156–188 (PAPA…TPDV), 204–230 (SSEP…EVPP), and 239–258 (RVKR…LLPP). The segment covering 177–188 (DVEDAGDETPDV) has biased composition (acidic residues). A compositionally biased stretch (low complexity) spans 204–213 (SSEPEAAPAP). The tract at residues 219–258 (SVDQDLGPEVPPENVLGALLRVKRLENPSPQAPARRLLPP) is C-terminal inhibitory domain; interacts with PCSK1. A Sufficient for inhibition of PCSK1 motif is present at residues 237 to 242 (LLRVKR).

As to quaternary structure, interacts via the C-terminal inhibitory domain with PCSK1 66 kDa form. Proteolytically cleaved in the Golgi. Little SAAS, PEN, PEN-20 and Big LEN are the major processed peptides in proSAAS-overexpressing AtT-20 pituitary corticotropic cell line. As to expression, expressed in brain (mostly hypothalamus and pituitary) and gut. Expressed in trigeminal ganglia and neuroendocrine cell lines. Expressed in pancreas, spinal cord and brain (most abundant in striatum, hippocampus, pons and medulla, and cortex) (at protein level).

The protein resides in the secreted. It is found in the golgi apparatus. The protein localises to the trans-Golgi network. Functionally, may function in the control of the neuroendocrine secretory pathway. Proposed be a specific endogenous inhibitor of PCSK1. ProSAAS and Big PEN-LEN, both containing the C-terminal inhibitory domain, but not the processed peptides reduce PCSK1 activity in the endoplasmic reticulum and Golgi. It reduces the activity of the 87 kDa form but not the autocatalytically derived 66 kDa form of PCSK1. Subsequent processing of proSAAS may eliminate the inhibition. Slows down convertase-mediated processing of proopiomelanocortin and proenkephalin. May control the intracellular timing of PCSK1 rather than its total level of activity. Its function is as follows. Endogenous ligand for GPR171. Neuropeptide involved in the regulation of feeding. In terms of biological role, endogenous ligand for GPR171. Neuropeptide involved in the regulation of feeding. This is ProSAAS (Pcsk1n) from Mus musculus (Mouse).